The chain runs to 305 residues: Porphobilinogen deaminase (305 aa).

Cys-241 carries the S-(dipyrrolylmethanemethyl)cysteine modification.

It belongs to the HMBS family. In terms of assembly, monomer. Dipyrromethane is required as a cofactor.

It catalyses the reaction 4 porphobilinogen + H2O = hydroxymethylbilane + 4 NH4(+). It functions in the pathway porphyrin-containing compound metabolism; protoporphyrin-IX biosynthesis; coproporphyrinogen-III from 5-aminolevulinate: step 2/4. Tetrapolymerization of the monopyrrole PBG into the hydroxymethylbilane pre-uroporphyrinogen in several discrete steps. This chain is Porphobilinogen deaminase, found in Exiguobacterium sp. (strain ATCC BAA-1283 / AT1b).